The following is a 227-amino-acid chain: 7-cyano-7-deazaguanine synthase (227 aa).

An ATP-binding site is contributed by 9–19 (LSGGLDSATVL). Zn(2+)-binding residues include Cys189, Cys199, Cys202, and Cys205.

This sequence belongs to the QueC family. The cofactor is Zn(2+).

It catalyses the reaction 7-carboxy-7-deazaguanine + NH4(+) + ATP = 7-cyano-7-deazaguanine + ADP + phosphate + H2O + H(+). Its pathway is purine metabolism; 7-cyano-7-deazaguanine biosynthesis. Functionally, catalyzes the ATP-dependent conversion of 7-carboxy-7-deazaguanine (CDG) to 7-cyano-7-deazaguanine (preQ(0)). In Cupriavidus necator (strain ATCC 17699 / DSM 428 / KCTC 22496 / NCIMB 10442 / H16 / Stanier 337) (Ralstonia eutropha), this protein is 7-cyano-7-deazaguanine synthase.